A 318-amino-acid polypeptide reads, in one-letter code: 2-methyl-6-phytyl-1,4-hydroquinone methyltransferase (318 aa).

An N-terminal signal peptide occupies residues 1–39 (MPEYLLLPAGLISLSLAIAAGLYLLTARGYQSSDSVANA). Residues 97–106 (VLDVGCGIGG) form an SAM motif I region. The interval 157-165 (GSFDVVWSV) is SAM motif II. The tract at residues 184–193 (VVKPGGILVV) is SAM motif III.

This sequence belongs to the class I-like SAM-binding methyltransferase superfamily. gTMT family.

It catalyses the reaction 2-methyl-6-phytyl-1,4-benzene-1,4-diol + S-adenosyl-L-methionine = 2,3-dimethyl-6-phytylbenzene-1,4-diol + S-adenosyl-L-homocysteine + H(+). The enzyme catalyses 2-methyl-6-(all-trans-nonaprenyl)benzene-1,4-diol + S-adenosyl-L-methionine = plastoquinol-9 + S-adenosyl-L-homocysteine + H(+). It carries out the reaction 6-geranylgeranyl-2-methylbenzene-1,4-diol + S-adenosyl-L-methionine = 6-geranylgeranyl-2,3-dimethylbenzene-1,4-diol + S-adenosyl-L-homocysteine + H(+). It participates in cofactor biosynthesis; tocopherol biosynthesis. Involved in a key methylation step in both tocopherol (vitamin E) and plastoquinone synthesis. Catalyzes the conversion of 2-methyl-6-phytyl-1,4-hydroquinol (MPBQ) to 2,3-dimethyl-6-phytyl-1,4-hydroquinol (DMPQ, a substrate for tocopherol cyclase), and 2-methyl-6-solanyl-1,4-benzoquinol (MSBQ) to plastoquinol. This Synechocystis sp. (strain ATCC 27184 / PCC 6803 / Kazusa) protein is 2-methyl-6-phytyl-1,4-hydroquinone methyltransferase.